We begin with the raw amino-acid sequence, 446 residues long: MVKHAVEANFDGLVGPTHNYAGLSWGNVASKSNVNAVANPREAALQGLAKMKRLADRGYVQGILPPHERPHIPTLRALGFEGNERQILEAVAKADPTILAAVSSASCMWTANAATVSPSADTADHRVHFTPANLSAKFHRSIEHQVTGRSLKAIFGDESYFAHHPALPSVSHFGDEGAANHTRLCSRYGEPGVELFVYGQVAFNESAPAPGKYPARQTLEASRAIARLHGLTDRHAVFAQQNPAAIDAGVFHNDVIAVGNGNCLFYHEQAFLDEARVLADIQERLTGAELEAVRVSSTQVPIEDAVASYLFNSQLLNTADGMLLAVPGECREVASVSRYLDELVKADTPITAVEVFDVKQSMRNGGGPACLRLRVVLNDDELHAINRGVILTDALYERLTSWVEAHYRDQLSQQDLADPMLLEEVRKALDELTGILGLGSIYDFQL.

Residues 21-30, Asn-112, and 139-140 contribute to the substrate site; these read AGLSWGNVAS and HR. The active site involves Glu-176. Substrate is bound at residue Arg-216. His-252 is a catalytic residue. Residues Asp-254 and Asn-364 each contribute to the substrate site. Residue Cys-370 is the Nucleophile of the active site.

This sequence belongs to the succinylarginine dihydrolase family. As to quaternary structure, homodimer.

It carries out the reaction N(2)-succinyl-L-arginine + 2 H2O + 2 H(+) = N(2)-succinyl-L-ornithine + 2 NH4(+) + CO2. It participates in amino-acid degradation; L-arginine degradation via AST pathway; L-glutamate and succinate from L-arginine: step 2/5. In terms of biological role, catalyzes the hydrolysis of N(2)-succinylarginine into N(2)-succinylornithine, ammonia and CO(2). This Marinobacter nauticus (strain ATCC 700491 / DSM 11845 / VT8) (Marinobacter aquaeolei) protein is N-succinylarginine dihydrolase.